A 709-amino-acid chain; its full sequence is MDTSNSWFDASKVQSLNFDLQTNSYYSNARGSDPSSYAIEGEYKTLATDDLGNILNLNYGETNEVIMNEINDLNLPLGPLSDEKSVKVSTFSELIGNDWQSMNFDLENNSREVTLNATSLLNENRLNQDSGMTVYQKTMSDKPHDEKKISMADNLLSTINKSEINKGFDRNLGELLLQQQQELREQLRAQQEANKKLELELKQTQYKQQQLQATLENSDGPQFLSPKRKISPASENVEDVYANSLSPMISPPMSNTSFTGSPSRRNNRQKYCLQRKNSSGTVGPLCFQELNEGFNDSLISPKKIRSNPNENLSSKTKFITPFTPKSRVSSATSNSANITPNNLRLDFKINVEDQESEYSEKPLGLGIELLGKPGPSPTKSVSLKSASVDIMPTIPGSVNNTPSVNKVSLSSSYIDQYTPRGKQLHFSSISENALGINAATPHLKPPSQQARHREGVFNDLDPNVLTKNTDNEGDDNEENEPESRFVISETPSPVLKSQSKYEGRSPQFGTHIKEINTYTTNSPSKITRKLTTLPRGSIDKYVKEMPDKTFECLFPGCTKTFKRRYNIRSHIQTHLEDRPYSCDHPGCDKAFVRNHDLIRHKKSHQEKAYACPCGKKFNREDALVVHRSRMICSGGKKYENVVIKRSPRKRGRPRKDGTSSVSSSPIKENINKDHNGQLMFKLEDQLRRERSYDGNGTGIMVSPMKTNQR.

At S225 the chain carries Phosphoserine. Residues 245-264 show a composition bias toward polar residues; it reads LSPMISPPMSNTSFTGSPSR. Residues 245–267 form a disordered region; the sequence is LSPMISPPMSNTSFTGSPSRRNN. Residues S278 and S300 each carry the phosphoserine modification. The residue at position 339 (T339) is a Phosphothreonine. S376 carries the post-translational modification Phosphoserine. Positions 443–483 are disordered; that stretch reads LKPPSQQARHREGVFNDLDPNVLTKNTDNEGDDNEENEPES. The segment covering 471-480 has biased composition (acidic residues); it reads NEGDDNEENE. Phosphoserine is present on residues S488, S492, and S505. S522 carries the phosphoserine; by CDC28 modification. 3 consecutive C2H2-type zinc fingers follow at residues 550–574, 580–604, and 609–632; these read FECLFPGCTKTFKRRYNIRSHIQTH, YSCDHPGCDKAFVRNHDLIRHKKSH, and YACPCGKKFNREDALVVHRSRMIC. Residues 635-659 carry the Nuclear localization signal motif; sequence GKKYENVVIKRSPRKRGRPRKDGTS. The interval 644–677 is disordered; that stretch reads KRSPRKRGRPRKDGTSSVSSSPIKENINKDHNGQ. S646 carries the phosphoserine; by CDC28 modification. The segment at residues 647-659 is a DNA-binding region (a.T hook); it reads PRKRGRPRKDGTS. Position 664 is a phosphoserine; by CDC28 (S664).

In terms of processing, cell cycle-dependent phosphorylation of three serine residues prevents SWI5 from entering the nucleus, and it accumulates in the cytoplasm. As a consequence of CDC28 kinase inactivation at the end of anaphase, the three serine residues are dephosphorylated and SWI5 enters the nucleus to activate transcription. It is then rapidly degraded. Threonine phosphorylation also seems to occur. Post-translationally, phosphorylated by PHO85.

The protein localises to the nucleus. The protein resides in the cytoplasm. Its function is as follows. Determines the mother-cell-specific transcription of the HO endonuclease gene that is responsible for the initiation of mating-type switching in yeast. Recognizes a specific sequence in the promoter of the HO gene. Activates EGT2 transcription in a concentration-dependent manner. Synthesized during G2 and early mitosis. In Saccharomyces cerevisiae (strain ATCC 204508 / S288c) (Baker's yeast), this protein is Transcriptional factor SWI5 (SWI5).